Here is a 344-residue protein sequence, read N- to C-terminus: L-rhamnose-proton symporter (344 aa).

A run of 10 helical transmembrane segments spans residues alanine 4–alanine 24, tryptophan 38–leucine 58, threonine 72–leucine 92, methionine 101–leucine 121, threonine 137–leucine 157, leucine 175–alanine 195, leucine 214–isoleucine 234, valine 259–glycine 279, methionine 290–leucine 310, and valine 321–glycine 341.

The protein belongs to the L-rhamnose transporter (TC 2.A.7.6) family.

The protein localises to the cell inner membrane. It catalyses the reaction L-rhamnopyranose(in) + H(+)(in) = L-rhamnopyranose(out) + H(+)(out). In terms of biological role, uptake of L-rhamnose across the cytoplasmic membrane with the concomitant transport of protons into the cell (symport system). This is L-rhamnose-proton symporter from Enterobacter sp. (strain 638).